Consider the following 213-residue polypeptide: Small ribosomal subunit protein uS5 (213 aa).

The S5 DRBM domain occupies 49–112 (LEEEVMDVNL…DNAKYNLIKV (64 aa)).

Belongs to the universal ribosomal protein uS5 family. In terms of assembly, part of the 30S ribosomal subunit. Contacts protein S4.

With S4 and S12 plays an important role in translational accuracy. The sequence is that of Small ribosomal subunit protein uS5 from Methanobrevibacter smithii (strain ATCC 35061 / DSM 861 / OCM 144 / PS).